Here is a 324-residue protein sequence, read N- to C-terminus: Protein GET4 (324 aa).

Belongs to the GET4 family. As to quaternary structure, interacts with GET3A.

It is found in the cytoplasm. The protein resides in the cytosol. Functionally, involved in the regulation of root hair growth. The sequence is that of Protein GET4 from Arabidopsis thaliana (Mouse-ear cress).